Consider the following 129-residue polypeptide: Iron-sulfur cluster assembly 1 homolog, mitochondrial (129 aa).

The N-terminal 12 residues, 1–12, are a transit peptide targeting the mitochondrion; it reads MSASLVRATVRA. Fe cation-binding residues include Cys-57, Cys-121, and Cys-123.

The protein belongs to the HesB/IscA family. Interacts with CRY2, but not with CRY1 (in vitro).

It localises to the mitochondrion. In terms of biological role, involved in the maturation of mitochondrial 4Fe-4S proteins functioning late in the iron-sulfur cluster assembly pathway. Probably involved in the binding of an intermediate of Fe/S cluster assembly. The chain is Iron-sulfur cluster assembly 1 homolog, mitochondrial (Isca1) from Mus musculus (Mouse).